Here is a 318-residue protein sequence, read N- to C-terminus: NADH-ubiquinone oxidoreductase chain 1 (318 aa).

The next 8 helical transmembrane spans lie at 2–22, 69–89, 102–122, 147–167, 172–192, 231–251, 253–273, and 294–314; these read LLTN…FLTL, LMFI…WAPL, ILFI…SGWA, AIIL…TLTI, MWLI…TLAE, IILM…NPLF, ELHT…FLWI, and LPLT…LAGI.

Belongs to the complex I subunit 1 family.

It is found in the mitochondrion inner membrane. It carries out the reaction a ubiquinone + NADH + 5 H(+)(in) = a ubiquinol + NAD(+) + 4 H(+)(out). Its function is as follows. Core subunit of the mitochondrial membrane respiratory chain NADH dehydrogenase (Complex I) that is believed to belong to the minimal assembly required for catalysis. Complex I functions in the transfer of electrons from NADH to the respiratory chain. The immediate electron acceptor for the enzyme is believed to be ubiquinone. This Bradypus variegatus (Brown-throated three-fingered sloth) protein is NADH-ubiquinone oxidoreductase chain 1 (MT-ND1).